The sequence spans 137 residues: ATP synthase epsilon chain (137 aa).

This sequence belongs to the ATPase epsilon chain family. As to quaternary structure, F-type ATPases have 2 components, CF(1) - the catalytic core - and CF(0) - the membrane proton channel. CF(1) has five subunits: alpha(3), beta(3), gamma(1), delta(1), epsilon(1). CF(0) has three main subunits: a, b and c.

It is found in the cell membrane. Functionally, produces ATP from ADP in the presence of a proton gradient across the membrane. This is ATP synthase epsilon chain from Syntrophomonas wolfei subsp. wolfei (strain DSM 2245B / Goettingen).